A 610-amino-acid polypeptide reads, in one-letter code: UvrABC system protein C (610 aa).

A GIY-YIG domain is found at 16–94 (SQPGVYRMYD…IKLYQPRYNV (79 aa)). Residues 204-239 (DQVLNQLVARMEQASGDLRFEEAGRLRDQIQAVRRV) enclose the UVR domain.

It belongs to the UvrC family. As to quaternary structure, interacts with UvrB in an incision complex.

Its subcellular location is the cytoplasm. Its function is as follows. The UvrABC repair system catalyzes the recognition and processing of DNA lesions. UvrC both incises the 5' and 3' sides of the lesion. The N-terminal half is responsible for the 3' incision and the C-terminal half is responsible for the 5' incision. This Erwinia tasmaniensis (strain DSM 17950 / CFBP 7177 / CIP 109463 / NCPPB 4357 / Et1/99) protein is UvrABC system protein C.